Consider the following 51-residue polypeptide: VTCDLLSIKGVAEHSACAANCLSMGKAGGRCENGICLCRKTTFKELWDKRF.

Intrachain disulfides connect C3–C31, C17–C36, and C21–C38. F51 carries the post-translational modification Phenylalanine amide.

Its subcellular location is the secreted. Functionally, antibacterial peptide against Gram-positive and Gram-negative bacteria and fungi. This is Defensin from Bombus pascuorum (Common carder bumblebee).